The following is a 158-amino-acid chain: Secreted RxLR effector protein 131 (158 aa).

A signal peptide spans 1–20 (MRQIPLVVVLLLAYAARLQG). The short motif at 39 to 57 (RDLDGSTTSMSVNVDDEER) is the RxLR-dEER element. The segment at 120–158 (KGNVKYLAIIYVICILSVLGILGTVFAINRNISNQYIHE) is host BKI1-binding. Residues 127–147 (AIIYVICILSVLGILGTVFAI) traverse the membrane as a helical segment. N150 carries an N-linked (GlcNAc...) asparagine glycan.

Belongs to the RxLR effector family. Interacts with host BKI1.

Its subcellular location is the secreted. The protein resides in the host cell membrane. Its function is as follows. Secreted effector that suppresses pathogen-associated molecular pattern (PAMP)-triggered immunity (PTI) in host plants. Suppresses both defense-related brassinosteroid (BR) and ERECTA (ER) signaling pathways in planta by interacting with host BRI1 kinase inhibitor 1 (BKI1) at the host plasma membrane, leading to a host dwarf phenotype. The polypeptide is Secreted RxLR effector protein 131 (Plasmopara viticola (Downy mildew of grapevine)).